The sequence spans 492 residues: Ferruginol synthase (492 aa).

A helical transmembrane segment spans residues 1-21 (METIALLAALFFIALTCFLTS). Topologically, residues 22 to 492 (GRRRNLPPGP…VPLKIIPLRP (471 aa)) are cytoplasmic. Cys-436 provides a ligand contact to heme.

This sequence belongs to the cytochrome P450 family. Heme serves as cofactor.

It is found in the endoplasmic reticulum membrane. The catalysed reaction is abieta-8,11,13-triene + reduced [NADPH--hemoprotein reductase] + O2 = ferruginol + oxidized [NADPH--hemoprotein reductase] + H2O + H(+). It participates in secondary metabolite biosynthesis; terpenoid biosynthesis. Functionally, cytochrome P450 enzyme (CYP) which catalyzes a unique two-electron oxidation cascade on abieta-8,11,13-triene to produce ferruginol, an intermediate in tanshinone biosynthesis. The chain is Ferruginol synthase from Isodon rubescens (Rabdosia rubescens).